The primary structure comprises 204 residues: V-set and transmembrane domain-containing protein 2-like protein (204 aa).

An N-terminal signal peptide occupies residues 1–24 (MGAPLAVALGALHYLALFLQLGGA). The Ig-like domain occupies 41–158 (ALFTETPHDM…DGKARHHKVK (118 aa)). Cysteine 62 and cysteine 142 are joined by a disulfide. The interval 168–204 (NSVLHLPEAPPAAPAPPPPKPGKELRKRSVDQEACSL) is disordered. A compositionally biased stretch (pro residues) spans 175 to 187 (EAPPAAPAPPPPK). A compositionally biased stretch (basic and acidic residues) spans 188–198 (PGKELRKRSVD).

The sequence is that of V-set and transmembrane domain-containing protein 2-like protein (VSTM2L) from Homo sapiens (Human).